Here is a 273-residue protein sequence, read N- to C-terminus: MVNAVKQIPTFLNDGANAIEADITFKGAVPTYSYHGTPCDFGRDCIRWEYFNVFLQTLRDYTTPGNSKYREKFILFVLDLKTGSLNNHEVRKAGENVAKGLLENYWNNGNNGGRAYVVLSLPDIAHYEFIRTFKEVLKTKGHENLLDKVGYDLSGPYWPSLPSLDSVHEAFKKAGVDGHVWLSDGLTNWAALDDMARLKQIVERRDSENGFISKVYYWSVDKYSTTRTALEVGVDGIMTNYPYVIIDVLNEAKYKDKYRLATYDDNPWETFKN.

Residues Glu-20 and Asp-22 each contribute to the Mg(2+) site. The active-site Nucleophile is His-35. A disulfide bridge connects residues Cys-39 and Cys-45. Residue Asp-79 participates in Mg(2+) binding.

It belongs to the arthropod phospholipase D family. Class I subfamily. Requires Mg(2+) as cofactor. Expressed by the venom gland.

The protein localises to the secreted. The enzyme catalyses an N-(acyl)-sphingosylphosphocholine = an N-(acyl)-sphingosyl-1,3-cyclic phosphate + choline. It carries out the reaction an N-(acyl)-sphingosylphosphoethanolamine = an N-(acyl)-sphingosyl-1,3-cyclic phosphate + ethanolamine. It catalyses the reaction a 1-acyl-sn-glycero-3-phosphocholine = a 1-acyl-sn-glycero-2,3-cyclic phosphate + choline. The catalysed reaction is a 1-acyl-sn-glycero-3-phosphoethanolamine = a 1-acyl-sn-glycero-2,3-cyclic phosphate + ethanolamine. In terms of biological role, dermonecrotic toxins cleave the phosphodiester linkage between the phosphate and headgroup of certain phospholipids (sphingolipid and lysolipid substrates), forming an alcohol (often choline) and a cyclic phosphate. This toxin acts on sphingomyelin (SM). It may also act on ceramide phosphoethanolamine (CPE), lysophosphatidylcholine (LPC) and lysophosphatidylethanolamine (LPE), but not on lysophosphatidylserine (LPS), and lysophosphatidylglycerol (LPG). It acts by transphosphatidylation, releasing exclusively cyclic phosphate products as second products. Induces dermonecrosis, hemolysis, increased vascular permeability, edema, inflammatory response, and platelet aggregation. The sequence is that of Dermonecrotic toxin from Loxosceles laeta (South American recluse spider).